We begin with the raw amino-acid sequence, 1194 residues long: DNA polymerase catalytic subunit (1194 aa).

It belongs to the DNA polymerase type-B family. As to quaternary structure, forms a complex with the ssDNA-binding protein, the DNA polymerase processivity factor, and the alkaline exonuclease. Interacts with the helicase-primase complex composed of the primase, the helicase and the primase-associated factor; this interaction may coordinate leading and lagging strand DNA synthesis at the replication fork.

It localises to the host nucleus. The enzyme catalyses DNA(n) + a 2'-deoxyribonucleoside 5'-triphosphate = DNA(n+1) + diphosphate. The catalysed reaction is Endonucleolytic cleavage to 5'-phosphomonoester.. Replicates viral genomic DNA. The replication complex is composed of six viral proteins: the DNA polymerase, processivity factor, primase, primase-associated factor, helicase, and ssDNA-binding protein. Additionally, the polymerase contains an intrinsic ribonuclease H (RNase H) activity that specifically degrades RNA/DNA heteroduplexes or duplex DNA substrates in the 5' to 3' direction. Therefore, it can catalyze the excision of the RNA primers that initiate the synthesis of Okazaki fragments at a replication fork during viral DNA replication. The chain is DNA polymerase catalytic subunit from Varicella-zoster virus (strain Oka vaccine) (HHV-3).